A 295-amino-acid polypeptide reads, in one-letter code: Cyclin-G1 (295 aa).

It belongs to the cyclin family. Cyclin G subfamily. As to expression, high levels in skeletal muscle, ovary, kidney and colon.

It localises to the nucleus. In terms of biological role, may play a role in growth regulation. Is associated with G2/M phase arrest in response to DNA damage. May be an intermediate by which p53 mediates its role as an inhibitor of cellular proliferation. The polypeptide is Cyclin-G1 (CCNG1) (Homo sapiens (Human)).